Consider the following 1235-residue polypeptide: ATP-dependent helicase/nuclease subunit A (1235 aa).

Residues 12–482 (ALWTDDQWKA…IDLSQNFRSR (471 aa)) form the UvrD-like helicase ATP-binding domain. 33-40 (AAAGSGKT) contacts ATP. The UvrD-like helicase C-terminal domain maps to 509–800 (AAELTLGASF…RMMTIHASKG (292 aa)).

It belongs to the helicase family. AddA subfamily. In terms of assembly, heterodimer of AddA and AddB/RexB. It depends on Mg(2+) as a cofactor.

It catalyses the reaction Couples ATP hydrolysis with the unwinding of duplex DNA by translocating in the 3'-5' direction.. The catalysed reaction is ATP + H2O = ADP + phosphate + H(+). In terms of biological role, the heterodimer acts as both an ATP-dependent DNA helicase and an ATP-dependent, dual-direction single-stranded exonuclease. Recognizes the chi site generating a DNA molecule suitable for the initiation of homologous recombination. The AddA nuclease domain is required for chi fragment generation; this subunit has the helicase and 3' -&gt; 5' nuclease activities. In Listeria innocua serovar 6a (strain ATCC BAA-680 / CLIP 11262), this protein is ATP-dependent helicase/nuclease subunit A.